Reading from the N-terminus, the 567-residue chain is Periplasmic [NiFe] hydrogenase large subunit (567 aa).

Glutamate 62 provides a ligand contact to Mg(2+). Positions 81 and 84 each coordinate Ni(2+). Cysteine 84 provides a ligand contact to Fe cation. Leucine 498 contributes to the Mg(2+) binding site. Positions 546 and 549 each coordinate Ni(2+). Cysteine 549 contacts Fe cation. Residue histidine 552 coordinates Mg(2+). A propeptide spanning residues 553–567 is cleaved from the precursor; the sequence is VIDGHTNEVHKFRIL.

It belongs to the [NiFe]/[NiFeSe] hydrogenase large subunit family. As to quaternary structure, heterodimer of a large and a small subunit. Ni(2+) is required as a cofactor. Requires Fe cation as cofactor.

The protein localises to the periplasm. The catalysed reaction is 2 Fe(III)-[cytochrome c3] + H2 = 2 Fe(II)-[cytochrome c3] + 2 H(+). Functionally, catalyzes the reversible oxidoreduction of molecular hydrogen, in conjunction with a specific electron acceptor, cytochrome c3. This is Periplasmic [NiFe] hydrogenase large subunit (hydB) from Nitratidesulfovibrio vulgaris (strain DSM 19637 / Miyazaki F) (Desulfovibrio vulgaris).